The following is a 110-amino-acid chain: Large ribosomal subunit protein uL22 (110 aa).

It belongs to the universal ribosomal protein uL22 family. Part of the 50S ribosomal subunit.

This protein binds specifically to 23S rRNA; its binding is stimulated by other ribosomal proteins, e.g. L4, L17, and L20. It is important during the early stages of 50S assembly. It makes multiple contacts with different domains of the 23S rRNA in the assembled 50S subunit and ribosome. Functionally, the globular domain of the protein is located near the polypeptide exit tunnel on the outside of the subunit, while an extended beta-hairpin is found that lines the wall of the exit tunnel in the center of the 70S ribosome. The protein is Large ribosomal subunit protein uL22 of Vibrio campbellii (strain ATCC BAA-1116).